Reading from the N-terminus, the 453-residue chain is Zinc finger protein Pegasus (453 aa).

C2H2-type zinc fingers lie at residues 101–123 (LKCRYCNYASKGTARLIEHIRIH), 129–151 (HRCHLCPFASAYERHLEAHMRSH), and 157–180 (YKCELCSFRCSDRSNLSHHRRRKH). Polar residues predominate over residues 279-293 (GQLSSLPPDTQNPAS). The segment at 279–375 (GQLSSLPPDT…QPSTPAPALP (97 aa)) is disordered. A compositionally biased stretch (low complexity) spans 315–332 (CSSAVSTSVAQSSSPASP). Over residues 356-368 (RTSTPSISNSQPS) the composition is skewed to polar residues. 2 consecutive C2H2-type zinc fingers follow at residues 383–405 (HHCQHCDMYFADNILYTIHMGCH) and 411–438 (FQCNICGCKCKNKYDFACHFARGACCQH).

This sequence belongs to the Ikaros C2H2-type zinc-finger protein family. As to quaternary structure, probably self-associates.

It is found in the nucleus. Functionally, transcriptional repressor that binds the core 5'GNNTGTNG-3' DNA consensus sequence. This chain is Zinc finger protein Pegasus (ikzf5), found in Xenopus laevis (African clawed frog).